Consider the following 654-residue polypeptide: Fructose-1,6-bisphosphatase class 3 (654 aa).

The segment at 288–307 (NPAFKPKKRPDKHERLTQRE) is disordered. The span at 298-307 (DKHERLTQRE) shows a compositional bias: basic and acidic residues.

The protein belongs to the FBPase class 3 family. The cofactor is Mn(2+).

It catalyses the reaction beta-D-fructose 1,6-bisphosphate + H2O = beta-D-fructose 6-phosphate + phosphate. The protein operates within carbohydrate biosynthesis; gluconeogenesis. This chain is Fructose-1,6-bisphosphatase class 3, found in Staphylococcus aureus (strain USA300).